An 814-amino-acid polypeptide reads, in one-letter code: Rho GTPase-activating protein 44 (814 aa).

The BAR domain occupies 14-249 (QTVGRAEKTE…IKAQQEAWVE (236 aa)). A Rho-GAP domain is found at 255 to 445 (KPLEEHLMIS…PIIQHADWFF (191 aa)). Disordered regions lie at residues 467-493 (ANYS…RPLS), 528-769 (RGSS…MSTD), and 784-814 (STLR…STAL). Residues 479–489 (PADRRQPEQAR) are compositionally biased toward basic and acidic residues. A Phosphoserine modification is found at Ser493. Composition is skewed to low complexity over residues 567-581 (SPAT…SGAS), 598-612 (SPGS…SIQG), 622-637 (PQPA…DQSP), 684-704 (SPYG…LSPA), and 741-752 (SVSLSASSPQST). Positions 727 to 814 (KPRQRPTLPP…SEEESESTAL (88 aa)) are interaction with BST2. The segment covering 790–805 (PLEHARRHSATDKRDS) has biased composition (basic and acidic residues). Phosphoserine is present on Ser805. The PDZ-binding signature appears at 811 to 814 (STAL).

As to quaternary structure, interacts with BST2 (via cytoplasmic domain). Interacts (probably via PDZ-binding motif) with SHANK3 (via PDZ domain); the interaction takes place in dendritic spines and promotes GRIA1 exocytosis. In terms of tissue distribution, specifically expressed in brain (at protein level). Detected in olfactory bulb, cortex, hippocampus, diencephalon and cerebellum (at protein level). Expressed in hippocampal neurons (at protein level).

It localises to the cell projection. The protein localises to the dendritic spine. Its subcellular location is the recycling endosome. It is found in the presynapse. The protein resides in the dendrite. GTPase-activating protein (GAP) that stimulates the GTPase activity of Rho-type GTPases. Thereby, controls Rho-type GTPases cycling between their active GTP-bound and inactive GDP-bound states. Acts as a GAP at least for CDC42 and RAC1. In neurons, is involved in dendritic spine formation and synaptic plasticity in a specific RAC1-GAP activity. Limits the initiation of exploratory dendritic filopodia. Recruited to actin-patches that seed filopodia, binds specifically to plasma membrane sections that are deformed inward by acto-myosin mediated contractile forces. Acts through GAP activity on RAC1 to reduce actin polymerization necessary for filopodia formation. In association with SHANK3, promotes GRIA1 exocytosis from recycling endosomes and spine morphological changes associated to long-term potentiation. The chain is Rho GTPase-activating protein 44 from Mus musculus (Mouse).